The chain runs to 133 residues: Small ribosomal subunit protein bS16 (133 aa).

Residues 99-133 are disordered; sequence EKWQQNQTERRQKRLAVKTRRRQAKKAAEAKGAEA. The span at 109 to 123 shows a compositional bias: basic residues; it reads RQKRLAVKTRRRQAK. Residues 124–133 show a composition bias toward basic and acidic residues; sequence KAAEAKGAEA.

Belongs to the bacterial ribosomal protein bS16 family.

This Chlorobium limicola (strain DSM 245 / NBRC 103803 / 6330) protein is Small ribosomal subunit protein bS16.